The following is a 509-amino-acid chain: Histidine--tRNA ligase, cytoplasmic (509 aa).

Ala2 carries the N-acetylalanine modification. Residues 3 to 59 (DRAALEDLVRVQGERVRGLKQQKASAEQIEEEVAKLLKLKAQLGPDEGKPKFVLKTP) enclose the WHEP-TRS domain. Ser66 carries the phosphoserine modification. L-histidine contacts are provided by residues 130-132 (DLT), Arg157, Gln173, Asp177, Arg326, and 330-331 (YY). The residue at position 356 (Ser356) is a Phosphoserine.

The protein belongs to the class-II aminoacyl-tRNA synthetase family. In terms of assembly, homodimer.

The protein localises to the cytoplasm. It catalyses the reaction tRNA(His) + L-histidine + ATP = L-histidyl-tRNA(His) + AMP + diphosphate + H(+). Its function is as follows. Catalyzes the ATP-dependent ligation of histidine to the 3'-end of its cognate tRNA, via the formation of an aminoacyl-adenylate intermediate (His-AMP). Plays a role in axon guidance. The protein is Histidine--tRNA ligase, cytoplasmic (HARS1) of Bos taurus (Bovine).